Consider the following 232-residue polypeptide: N-(5'-phosphoribosyl)anthranilate isomerase (232 aa).

It belongs to the TrpF family.

The enzyme catalyses N-(5-phospho-beta-D-ribosyl)anthranilate = 1-(2-carboxyphenylamino)-1-deoxy-D-ribulose 5-phosphate. The protein operates within amino-acid biosynthesis; L-tryptophan biosynthesis; L-tryptophan from chorismate: step 3/5. The polypeptide is N-(5'-phosphoribosyl)anthranilate isomerase (TRP1) (Wickerhamomyces anomalus (Yeast)).